The following is a 577-amino-acid chain: Isocitrate dehydrogenase kinase/phosphatase (577 aa).

ATP is bound by residues 318–324 and Lys-339; that span reads APGVRGM. The active site involves Asp-374.

This sequence belongs to the AceK family.

The protein localises to the cytoplasm. It catalyses the reaction L-seryl-[isocitrate dehydrogenase] + ATP = O-phospho-L-seryl-[isocitrate dehydrogenase] + ADP + H(+). In terms of biological role, bifunctional enzyme which can phosphorylate or dephosphorylate isocitrate dehydrogenase (IDH) on a specific serine residue. This is a regulatory mechanism which enables bacteria to bypass the Krebs cycle via the glyoxylate shunt in response to the source of carbon. When bacteria are grown on glucose, IDH is fully active and unphosphorylated, but when grown on acetate or ethanol, the activity of IDH declines drastically concomitant with its phosphorylation. The polypeptide is Isocitrate dehydrogenase kinase/phosphatase (Pseudomonas aeruginosa (strain ATCC 15692 / DSM 22644 / CIP 104116 / JCM 14847 / LMG 12228 / 1C / PRS 101 / PAO1)).